A 222-amino-acid polypeptide reads, in one-letter code: N-(5'-phosphoribosyl)anthranilate isomerase (222 aa).

The protein belongs to the TrpF family.

The catalysed reaction is N-(5-phospho-beta-D-ribosyl)anthranilate = 1-(2-carboxyphenylamino)-1-deoxy-D-ribulose 5-phosphate. It participates in amino-acid biosynthesis; L-tryptophan biosynthesis; L-tryptophan from chorismate: step 3/5. This chain is N-(5'-phosphoribosyl)anthranilate isomerase, found in Rhizobium etli (strain CIAT 652).